A 160-amino-acid chain; its full sequence is Ribonuclease P protein component 2 (160 aa).

The protein belongs to the eukaryotic/archaeal RNase P protein component 2 family. As to quaternary structure, consists of a catalytic RNA component and at least 4-5 protein subunits.

It localises to the cytoplasm. It catalyses the reaction Endonucleolytic cleavage of RNA, removing 5'-extranucleotides from tRNA precursor.. Part of ribonuclease P, a protein complex that generates mature tRNA molecules by cleaving their 5'-ends. The protein is Ribonuclease P protein component 2 of Methanoculleus marisnigri (strain ATCC 35101 / DSM 1498 / JR1).